Consider the following 887-residue polypeptide: Cadherin-1 (887 aa).

The first 26 residues, 1-26 (MGRRWGSPALQRFPVLVLLLLLQVCG), serve as a signal peptide directing secretion. Positions 27–160 (RRCDEAAPCQ…DPGFLRRQKR (134 aa)) are excised as a propeptide. 5 Cadherin domains span residues 161 to 268 (DWVI…KPVF), 269 to 381 (IKEV…IPIF), 382 to 493 (NPTM…PPVF), 494 to 599 (VPPI…DNGP), and 600 to 704 (TPEP…RRSY). The Extracellular segment spans residues 161-714 (DWVIPPISCL…IVGGLGVPAI (554 aa)). Ca(2+) is bound at residue D263. N291 is a glycosylation site (N-linked (GlcNAc...) asparagine). D294 is a Ca(2+) binding site. N346 is a glycosylation site (N-linked (GlcNAc...) asparagine). N-linked (GlcNAc...) asparagine glycans are attached at residues N564 and N643. Residues 715-735 (LGILGGILALLILLLLLLLFA) traverse the membrane as a helical segment. Residues 736 to 887 (RRRKVEKEPL…ELYGGGEDDE (152 aa)) lie on the Cytoplasmic side of the membrane. A disordered region spans residues 745–770 (LLPPEDDMRDNVYNYDEEGGGEEDQD). Positions 759-770 (YDEEGGGEEDQD) are enriched in acidic residues.

As to quaternary structure, homodimer. Interacts with CTNNA2. Expressed in the liver.

The protein resides in the cell junction. The protein localises to the adherens junction. It is found in the cell membrane. It localises to the endosome. Its subcellular location is the golgi apparatus. The protein resides in the trans-Golgi network. The protein localises to the cytoplasm. It is found in the desmosome. Its function is as follows. Cadherins are calcium-dependent cell adhesion proteins. They preferentially interact with themselves in a homophilic manner in connecting cells; cadherins may thus contribute to the sorting of heterogeneous cell types. Promotes organization of radial actin fiber structure and cellular response to contractile forces, via anchoring of radial actin fibers to CDH1 junction complexes at the cell membrane. E-cadherin is a ligand for integrin alpha-E/beta-7. This chain is Cadherin-1 (CDH1), found in Gallus gallus (Chicken).